An 82-amino-acid chain; its full sequence is Large ribosomal subunit protein bL31 (82 aa).

The protein belongs to the bacterial ribosomal protein bL31 family. Type A subfamily. As to quaternary structure, part of the 50S ribosomal subunit.

In terms of biological role, binds the 23S rRNA. The sequence is that of Large ribosomal subunit protein bL31 from Rippkaea orientalis (strain PCC 8801 / RF-1) (Cyanothece sp. (strain PCC 8801)).